The primary structure comprises 164 residues: Choriogonadotropin subunit beta (164 aa).

A signal peptide spans 1-20 (MEMLQGLLLCLLLSTGGAWA). 6 cysteine pairs are disulfide-bonded: C29-C77, C43-C92, C46-C130, C54-C108, C58-C110, and C113-C120. N50 carries an N-linked (GlcNAc...) asparagine glycan. The segment at 135–164 (FQDSSSKDPPRNLTSPSQLLEPADPPLVPQ) is disordered. O-linked (GalNAc...) serine glycosylation occurs at S140. N146 is a glycosylation site (N-linked (GlcNAc...) asparagine). O-linked (GalNAc...) serine glycosylation is present at S151.

Belongs to the glycoprotein hormones subunit beta family. Heterodimer of a common alpha chain and a unique beta chain which confers biological specificity to thyrotropin, lutropin, follitropin and gonadotropin. Placenta.

The protein localises to the secreted. In terms of biological role, stimulates the ovaries to synthesize the steroids that are essential for the maintenance of pregnancy. This chain is Choriogonadotropin subunit beta (CGB), found in Callithrix jacchus (White-tufted-ear marmoset).